The chain runs to 267 residues: Zerumbone synthase (267 aa).

Leu9–Cys33 contacts NAD(+). Residue Ser142 coordinates substrate. Residue Tyr155 is the Proton acceptor of the active site.

It belongs to the short-chain dehydrogenases/reductases (SDR) family. As to expression, expressed in leaves, stems and rhizomes.

The catalysed reaction is 10-hydroxy-alpha-humulene + NAD(+) = zerumbone + NADH + H(+). Functionally, catalyzes 8-hydroxy-alpha-humulene into zerumbone in presence of NAD. Also converts borneol to camphor in vitro. Zerumbone is a highly promising multi-anticancer agent. The sequence is that of Zerumbone synthase (ZSD1) from Zingiber zerumbet (Shampoo ginger).